The primary structure comprises 228 residues: UPF0758 protein MW1604 (228 aa).

The MPN domain occupies lysine 102–phenylalanine 224. Residues histidine 173, histidine 175, and aspartate 186 each contribute to the Zn(2+) site. Residues histidine 173–aspartate 186 carry the JAMM motif motif.

Belongs to the UPF0758 family.

This Staphylococcus aureus (strain MW2) protein is UPF0758 protein MW1604.